The following is a 115-amino-acid chain: UPF0145 protein lp_2083 (115 aa).

This sequence belongs to the UPF0145 family.

In Lactiplantibacillus plantarum (strain ATCC BAA-793 / NCIMB 8826 / WCFS1) (Lactobacillus plantarum), this protein is UPF0145 protein lp_2083.